The primary structure comprises 559 residues: Dihydroxy-acid dehydratase (559 aa).

Asp81 provides a ligand contact to Mg(2+). Cys122 contributes to the [2Fe-2S] cluster binding site. Positions 123 and 124 each coordinate Mg(2+). The residue at position 124 (Lys124) is an N6-carboxylysine. A [2Fe-2S] cluster-binding site is contributed by Cys195. Position 448 (Glu448) interacts with Mg(2+). Catalysis depends on Ser474, which acts as the Proton acceptor.

Belongs to the IlvD/Edd family. As to quaternary structure, homodimer. [2Fe-2S] cluster is required as a cofactor. Requires Mg(2+) as cofactor.

The catalysed reaction is (2R)-2,3-dihydroxy-3-methylbutanoate = 3-methyl-2-oxobutanoate + H2O. The enzyme catalyses (2R,3R)-2,3-dihydroxy-3-methylpentanoate = (S)-3-methyl-2-oxopentanoate + H2O. It functions in the pathway amino-acid biosynthesis; L-isoleucine biosynthesis; L-isoleucine from 2-oxobutanoate: step 3/4. Its pathway is amino-acid biosynthesis; L-valine biosynthesis; L-valine from pyruvate: step 3/4. In terms of biological role, functions in the biosynthesis of branched-chain amino acids. Catalyzes the dehydration of (2R,3R)-2,3-dihydroxy-3-methylpentanoate (2,3-dihydroxy-3-methylvalerate) into 2-oxo-3-methylpentanoate (2-oxo-3-methylvalerate) and of (2R)-2,3-dihydroxy-3-methylbutanoate (2,3-dihydroxyisovalerate) into 2-oxo-3-methylbutanoate (2-oxoisovalerate), the penultimate precursor to L-isoleucine and L-valine, respectively. The protein is Dihydroxy-acid dehydratase of Geobacillus kaustophilus (strain HTA426).